Reading from the N-terminus, the 125-residue chain is Large ribosomal subunit protein bL19 (125 aa).

The protein belongs to the bacterial ribosomal protein bL19 family.

This protein is located at the 30S-50S ribosomal subunit interface and may play a role in the structure and function of the aminoacyl-tRNA binding site. This Wolbachia pipientis wMel protein is Large ribosomal subunit protein bL19.